Reading from the N-terminus, the 78-residue chain is Pro-glucagon (78 aa).

This sequence belongs to the glucagon family.

The protein resides in the secreted. Functionally, plays a key role in glucose metabolism and homeostasis. Regulates blood glucose by increasing gluconeogenesis and decreasing glycolysis. This is Pro-glucagon (gcg) from Atractosteus spatula (Alligator gar).